We begin with the raw amino-acid sequence, 216 residues long: MSITAAQVNELRKATGAGLMDCKKALTETGGDHEQAVDYLRKKGLAAASKKSGRVATEGLVGSYIHAGGKIGVLVEVNCETDFVAKNENFQAFVKDIAMHIAAASPLYVRREEVDPDVLEREKAIYRAKAKESGKPDNIVEKIIEGQVNKFYADICLLEQPFVKDSDKTVQTYLNETIAAIGENISIRRFAKFTLGEGLAKKESDFAAEVAAAAGV.

The segment at 81-84 is involved in Mg(2+) ion dislocation from EF-Tu; that stretch reads TDFV.

This sequence belongs to the EF-Ts family.

The protein localises to the cytoplasm. Associates with the EF-Tu.GDP complex and induces the exchange of GDP to GTP. It remains bound to the aminoacyl-tRNA.EF-Tu.GTP complex up to the GTP hydrolysis stage on the ribosome. This Geotalea uraniireducens (strain Rf4) (Geobacter uraniireducens) protein is Elongation factor Ts.